The sequence spans 340 residues: Ava biosynthesis cluster protein G (340 aa).

Transmembrane regions (helical) follow at residues 15–35 (WSAF…NIWN), 81–101 (FMIS…LQFV), 118–138 (AFFV…VHAF), and 148–168 (LSIM…FLCI). N-linked (GlcNAc...) asparagine glycosylation occurs at Asn171. The next 2 helical transmembrane spans lie at 219–239 (FSSV…YVAF) and 315–335 (SALT…WLQI).

The protein localises to the membrane. The protein operates within secondary metabolite biosynthesis. Part of the cluster that mediates the biosynthesis of a highly modified cyclo-arginine-tryptophan dipeptide (cRW). The first step of the pathway is perfornmed by the arginine-containing cyclodipeptide synthase (RCPDS) avaA that acts as the scaffold-generating enzyme and is responsible for formation of the cyclo-Arg-Trp (cRW) diketopiperazine. AvaB then acts as a multifunctional flavoenzyme that is responsible for generating the cyclo-Arg-formylkynurenine DKP, which can be deformylated by avaC. AvaB then further catalyzes an additional N-oxidation followed by cyclization and dehydration. The next step is an N-acetylation of the guanidine group catalyzed by the arginine N-acetyltransferase avaD. The roles of the additional enzymes identified within the ava cluster still have to be determined. In Aspergillus versicolor, this protein is Ava biosynthesis cluster protein G.